The primary structure comprises 282 residues: Cell division protein DivIB (282 aa).

Over 1-59 the chain is Cytoplasmic; the sequence is MLDDRSAIEHHKYSQRLTELERRSAAAQQRQQKKKPPKMHVGNKIRGIKIKRYVSNGER. The segment at 19-41 is disordered; that stretch reads ELERRSAAAQQRQQKKKPPKMHV. Over residues 31-41 the composition is skewed to basic residues; sequence QQKKKPPKMHV. The chain crosses the membrane as a helical span at residues 60–80; it reads VLKLVVLFSAILLFMLYIISP. The Extracellular segment spans residues 81–282; that stretch reads LSKITTLHVT…YSYDYGSKDK (202 aa). The POTRA domain maps to 82–153; that stretch reads SKITTLHVTG…QSLQISVKEN (72 aa).

This sequence belongs to the FtsQ/DivIB family. DivIB subfamily.

It is found in the cell membrane. In terms of biological role, cell division protein that may be involved in stabilizing or promoting the assembly of the division complex. The protein is Cell division protein DivIB of Limosilactobacillus reuteri (strain ATCC 55730 / SD2112) (Lactobacillus reuteri).